A 761-amino-acid polypeptide reads, in one-letter code: MSQLYALNGQPLAGKSDDLANKLAAFGLSQPNHSSLSEQQSTNSLLHGSGAFNKPPLSRNSTTNPLNLLYTQTQQPARSTTPFLLNPVGSSPGKLPVPSRNNSYLQGTAESNSGNFANNSISNNCWNSAYNSNSFEGTGSSPNFPPQNQFLSDSRSSIATLNAIPSLDQSVLLNPNLRARTPSLVPEHYFDDTDKSVHSKSSSGSNSLSEASNDDLESSIIQIVGGLPDDFDDRELSGIFTFCEGYDFSKIESENGHRKAIVYFRNAIAALKAKNMLNASSTNNFTIIQRDVVRQQENEYHKGIPPLTTPSLYSQRLSNNYDSTTPGFPRFSPANFDSVINKDVTSESRMSTSYPAVLEAFKSFNPIKAPKAEYLNQSRASMGNPSPSNWNNRLLQPSSKEQAVYSFQTQKNSKGLQFTSNELTNPTAKYSQLPNNIANIGESNSLSNQPNNFAQTSFDYQPNHPNAISPKAKFSLPSRPSYHKDNSFISKQAIDKSNPFEEALRLERTSPVKELPAIRPRTIPLNGVAPYESELRPPPKWKPMPDLKVVRSRPSLKQRPLRSAEYVRVCELKCLQEEEFDNKVLLEQVESNVQTDHNSPCNTIYVGNLSNPDQEKKLRLAFSKEKGYRRLCFKIKGNSPMCFVEFEEVCHAAKAMEKMQGAALDDKIKGGIRLSYSKNPLGVRSTENLSTTASLFQQHGPPKKSTDCYSAKASAAVERKYHFQNMTPKPNGTNSVTTLNRTQTHSSEVNDLFDIFEFPSK.

3 stretches are compositionally biased toward polar residues: residues 31 to 46, 58 to 83, and 99 to 110; these read PNHSSLSEQQSTNSLL, SRNSTTNPLNLLYTQTQQPARSTTPF, and SRNNSYLQGTAE. Disordered regions lie at residues 31–110 and 188–213; these read PNHS…GTAE and HYFDDTDKSVHSKSSSGSNSLSEASN. A compositionally biased stretch (basic and acidic residues) spans 188–197; that stretch reads HYFDDTDKSV. Over residues 199–211 the composition is skewed to low complexity; that stretch reads SKSSSGSNSLSEA. Residues 223 to 289 form the RRM 1 domain; the sequence is IVGGLPDDFD…SSTNNFTIIQ (67 aa). Residues 442–466 are compositionally biased toward polar residues; the sequence is ESNSLSNQPNNFAQTSFDYQPNHPN. The interval 442–468 is disordered; it reads ESNSLSNQPNNFAQTSFDYQPNHPNAI. One can recognise an RRM 2 domain in the interval 602–679; sequence NTIYVGNLSN…GGIRLSYSKN (78 aa).

The protein is RNA-binding protein mde7 (mde7) of Schizosaccharomyces pombe (strain 972 / ATCC 24843) (Fission yeast).